The primary structure comprises 461 residues: Phosphomethylpyrimidine synthase (461 aa).

Residues Asn80, Met109, Tyr139, His175, 195–197, 236–239, and Glu275 contribute to the substrate site; these read SRG and DSLR. His279 serves as a coordination point for Zn(2+). Substrate is bound at residue Tyr302. A Zn(2+)-binding site is contributed by His343. Residues Cys423, Cys426, and Cys431 each coordinate [4Fe-4S] cluster.

Belongs to the ThiC family. It depends on [4Fe-4S] cluster as a cofactor.

It catalyses the reaction 5-amino-1-(5-phospho-beta-D-ribosyl)imidazole + S-adenosyl-L-methionine = 4-amino-2-methyl-5-(phosphooxymethyl)pyrimidine + CO + 5'-deoxyadenosine + formate + L-methionine + 3 H(+). The protein operates within cofactor biosynthesis; thiamine diphosphate biosynthesis. Catalyzes the synthesis of the hydroxymethylpyrimidine phosphate (HMP-P) moiety of thiamine from aminoimidazole ribotide (AIR) in a radical S-adenosyl-L-methionine (SAM)-dependent reaction. The chain is Phosphomethylpyrimidine synthase from Picosynechococcus sp. (strain ATCC 27264 / PCC 7002 / PR-6) (Agmenellum quadruplicatum).